The sequence spans 412 residues: Peptidase T (412 aa).

His81 provides a ligand contact to Zn(2+). Asp83 is a catalytic residue. Position 144 (Asp144) interacts with Zn(2+). Catalysis depends on Glu178, which acts as the Proton acceptor. Positions 179, 201, and 383 each coordinate Zn(2+).

Belongs to the peptidase M20B family. It depends on Zn(2+) as a cofactor.

The protein localises to the cytoplasm. It carries out the reaction Release of the N-terminal residue from a tripeptide.. Functionally, cleaves the N-terminal amino acid of tripeptides. The polypeptide is Peptidase T (Bacillus cereus (strain ZK / E33L)).